A 357-amino-acid chain; its full sequence is tRNA-specific 2-thiouridylase MnmA (357 aa).

Residues 7–14 and methionine 33 each bind ATP; that span reads GLSGGVDS. The interaction with target base in tRNA stretch occupies residues 94-96; that stretch reads NPD. Cysteine 99 serves as the catalytic Nucleophile. A disulfide bridge links cysteine 99 with cysteine 195. Glycine 123 contacts ATP. The segment at 145 to 147 is interaction with tRNA; that stretch reads KDQ. Cysteine 195 (cysteine persulfide intermediate) is an active-site residue. An interaction with tRNA region spans residues 303–304; it reads RY.

It belongs to the MnmA/TRMU family.

The protein resides in the cytoplasm. The enzyme catalyses S-sulfanyl-L-cysteinyl-[protein] + uridine(34) in tRNA + AH2 + ATP = 2-thiouridine(34) in tRNA + L-cysteinyl-[protein] + A + AMP + diphosphate + H(+). Its function is as follows. Catalyzes the 2-thiolation of uridine at the wobble position (U34) of tRNA, leading to the formation of s(2)U34. The sequence is that of tRNA-specific 2-thiouridylase MnmA from Akkermansia muciniphila (strain ATCC BAA-835 / DSM 22959 / JCM 33894 / BCRC 81048 / CCUG 64013 / CIP 107961 / Muc).